The sequence spans 134 residues: Arsenate reductase (134 aa).

Active-site nucleophile residues include Cys11, Cys83, and Cys90. Disulfide bonds link Cys11/Cys83 and Cys83/Cys90.

The protein belongs to the low molecular weight phosphotyrosine protein phosphatase family. Thioredoxin-coupled ArsC subfamily.

The protein resides in the cytoplasm. The catalysed reaction is arsenate + [thioredoxin]-dithiol + H(+) = arsenite + [thioredoxin]-disulfide + H2O. In terms of biological role, catalyzes the reduction of arsenate [As(V)] to arsenite [As(III)]. The chain is Arsenate reductase from Bacillus anthracis (strain A0248).